Consider the following 164-residue polypeptide: C-type lectin 1 (164 aa).

The N-terminal stretch at 1–23 (MGRFLFASLGLLVVAFSLSGTGA) is a signal peptide. Intrachain disulfides connect Cys-27–Cys-38, Cys-55–Cys-154, and Cys-129–Cys-146. Residues 34-155 (YNVSCYKLFY…CTLLHPFLCQ (122 aa)) enclose the C-type lectin domain. N-linked (GlcNAc...) asparagine glycosylation is found at Asn-35 and Asn-109. The Mannose-binding signature appears at 119-121 (EPN). Residues Glu-127, Asn-142, and Asp-143 each coordinate Ca(2+).

The protein belongs to the true venom lectin family. In terms of tissue distribution, expressed by the venom gland.

It is found in the secreted. In terms of biological role, mannose-binding lectin which recognizes specific carbohydrate structures and agglutinates a variety of animal cells by binding to cell-surface glycoproteins and glycolipids. May be a calcium-dependent lectin. This chain is C-type lectin 1, found in Hydrophis hardwickii (Hardwick's spine-bellied seasnake).